We begin with the raw amino-acid sequence, 308 residues long: tRNA dimethylallyltransferase (308 aa).

10–17 (GPTASGKT) serves as a coordination point for ATP. 12-17 (TASGKT) lines the substrate pocket. 2 interaction with substrate tRNA regions span residues 35–38 (DSSL) and 159–163 (QRIFR).

Belongs to the IPP transferase family. In terms of assembly, monomer. The cofactor is Mg(2+).

The catalysed reaction is adenosine(37) in tRNA + dimethylallyl diphosphate = N(6)-dimethylallyladenosine(37) in tRNA + diphosphate. Functionally, catalyzes the transfer of a dimethylallyl group onto the adenine at position 37 in tRNAs that read codons beginning with uridine, leading to the formation of N6-(dimethylallyl)adenosine (i(6)A). The protein is tRNA dimethylallyltransferase of Francisella tularensis subsp. tularensis (strain FSC 198).